The chain runs to 644 residues: Transcription factor cep-1 (644 aa).

The DNA-binding element occupies 223–418; the sequence is EKWMEIDVLK…NFCEREDAKQ (196 aa). Zn(2+)-binding residues include C307, H310, C361, and C365. The interval 528–555 is required for tertiary structure stability of the protein; sequence TNYSFRTLTLSTAEYTKVVEFLAREAKV.

Belongs to the p53 family. As to quaternary structure, homodimer. Interacts (via C-terminus domain) with prmt-5; not methylated by prmt-5. Interacts with cbp-1 (via HAT domain); cep-1 transcriptional activity may be inhibited by interaction with methylated cbp-1. Component of a complex that contains prmt-5 and cbp-1. Interacts with ape-1; the interaction inhibits pro-apoptotic activity of cep-1. Zn(2+) is required as a cofactor. Phosphorylated in response to IR-induced DNA damage which is thought to be mediated by akt-1. In terms of tissue distribution, expressed in pharyngeal muscle and neurons.

It is found in the nucleus. In terms of biological role, transcriptional activator that binds the same DNA consensus sequence as p53. Has a role in normal development to ensure proper meiotic chromosome segregation. Promotes apoptosis under conditions of cellular and genotoxic stress in response to DNA damage, hypoxia, or starvation. Regulates germline apoptosis in response to DNA damage. Its pro-apoptotic activity is inhibited when bound to ape-1 in vitro. Plays a role in cell cycle arrest in the germline in response to DNA damage by UV-C light. However, not required for survival in response to DNA damage induced by UV-C light, indicating that it is unlikely to be involved in DNA repair. Required for induction of ced-13 in response to DNA damage. Regulates DNA damage-induced apoptosis by inducing transcription of the programmed cell death activator egl-1. Regulates germline proliferation by activating phg-1. Modulates lifespan. This is Transcription factor cep-1 from Caenorhabditis elegans.